The following is a 211-amino-acid chain: Probable transcriptional regulatory protein SgaR (211 aa).

The 117-residue stretch at 10 to 126 (EVSIVDQNPV…VLLEAVVSVA (117 aa)) folds into the Response regulatory domain. 4-aspartylphosphate is present on Asp15. The 66-residue stretch at 141–206 (NHDPLESLTA…MAVALHVSIN (66 aa)) folds into the HTH luxR-type domain. Residues 165 to 184 (NLQIAARTGISRNTVKYHLK) constitute a DNA-binding region (H-T-H motif).

Not known. Could act on the sgaA gene expression. The chain is Probable transcriptional regulatory protein SgaR (sgaR) from Hyphomicrobium methylovorum.